The primary structure comprises 223 residues: MSDICDANKLKHRFRGYFPVVIDVETAGFNSQTDALLEIAVTLLKMDDEGMLGIDKTLHFHIEPFEGANLEPAALAFNGIDPNNPLRGAVSEKEAFLDIFKAVKKAQKAADCHRCIIVAHNAAFDHGFVSKAIERCDLKRSPFHPFATFDTATLAGLAIGHTVLAKACMMAGIPFDNKEAHSALYDTERTAELFCYIVNRWKQLGGWPLLAAGAQDAESDTEE.

Residues 20–194 (VVIDVETAGF…YDTERTAELF (175 aa)) enclose the Exonuclease domain. 4 residues coordinate Mg(2+): Asp-23, Glu-25, His-181, and Asp-186. The active-site Proton donor/acceptor is His-181.

It belongs to the RNase T family. As to quaternary structure, homodimer. It depends on Mg(2+) as a cofactor.

Functionally, trims short 3' overhangs of a variety of RNA species, leaving a one or two nucleotide 3' overhang. Responsible for the end-turnover of tRNA: specifically removes the terminal AMP residue from uncharged tRNA (tRNA-C-C-A). Also appears to be involved in tRNA biosynthesis. The sequence is that of Ribonuclease T from Shewanella sp. (strain W3-18-1).